Consider the following 134-residue polypeptide: Ethylmalonyl-CoA/methylmalonyl-CoA epimerase (134 aa).

Residues 4–134 (RLNHVAIAVP…NGCLVELEQV (131 aa)) enclose the VOC domain. Co(2+) contacts are provided by His7, His79, and Glu130. Glu130 serves as the catalytic Proton donor/acceptor.

Belongs to the methylmalonyl-CoA epimerase family. Requires Co(2+) as cofactor. Mn(2+) serves as cofactor.

The catalysed reaction is (2R)-ethylmalonyl-CoA = (2S)-ethylmalonyl-CoA. It carries out the reaction (R)-methylmalonyl-CoA = (S)-methylmalonyl-CoA. Its function is as follows. Promiscuous isomerase that catalyzes epimerization of both ethylmalonyl-CoA and methylmalonyl-CoA. Has thus a dual role in the ethylmalonyl-CoA pathway for acetyl-CoA assimilation required for R.sphaeroides growth on acetate as sole carbon source. This Cereibacter sphaeroides (strain ATCC 17023 / DSM 158 / JCM 6121 / CCUG 31486 / LMG 2827 / NBRC 12203 / NCIMB 8253 / ATH 2.4.1.) (Rhodobacter sphaeroides) protein is Ethylmalonyl-CoA/methylmalonyl-CoA epimerase.